We begin with the raw amino-acid sequence, 168 residues long: mRNA stability protein IGO1 (168 aa).

Residues 1–13 (MSNENLSPNSSNP) show a composition bias toward low complexity. Residues 1 to 31 (MSNENLSPNSSNPDLTKLNNGESGTIDTSKF) are disordered. Over residues 17–31 (KLNNGESGTIDTSKF) the composition is skewed to polar residues. 2 positions are modified to phosphoserine: Ser-32 and Ser-64. A disordered region spans residues 125–168 (KEGSISSGPPSSNNGTIGGGSTSSTPVGNHSSSSSSLYTESPIR). 2 stretches are compositionally biased toward low complexity: residues 127 to 139 (GSIS…SNNG) and 146 to 168 (TSST…SPIR).

This sequence belongs to the endosulfine family. Interacts with RIM15, DHH1, PBP1, PBP4 and LSM12. Post-translationally, phosphorylated at Ser-64 by RIM15.

In terms of biological role, required for TORC1 to properly control gene expression and chronological life span. Plays an essential role in initiation of the G0 program by preventing the degradation of specific nutrient-regulated mRNAs via the 5'-3' mRNA decay pathway. This chain is mRNA stability protein IGO1 (IGO1), found in Saccharomyces cerevisiae (strain ATCC 204508 / S288c) (Baker's yeast).